Reading from the N-terminus, the 957-residue chain is MARYNPFSFTPGPVVFFTTVIYVGLFAALLVTHLTVPDYPSDPPAGINLTEAWADLEHITRRFHPYNSHANDHVRGYLLSRIQGVIATKALDASQVEVIDDLTSNATFSSGATSVYFEGTNIIVVIRGSEDDEPFNSTDRKPNNGGVLVNAHYDSVSSGYGATDDGVGVVTVLQLLSYFTESHNWPKRTIILLLNNGEEDFLNGAKAFMRNPISQVPHTFVNLEGAGAGGRATLFRSTDTEVTRFYSKSKYPFGTVVSGDGFKKGLIRSETDYRVFHGELGLRGLDIAFMEPRARYHTVEDSTRETSMNSLWHMLSAALASTSGLAAVTGEEFSGSESLDNGRVNAGRGSDGVWFDLFGRVFVVFQLHTLFALCVTLLVVAPIALIGLTFGLSKADKNYLLARKAFVYSSDDDNPVQLYGWRGFFRFPIVFVSATAVVVALAYLLVRFNAFIIYSSPFAVWSMMLSAWFFVAWFFSRGADAMRPSALQRMYALIWLFIGSFVLLTIITVFVNNYQVVAGYPALFYFAVVFAALMLSYLELFFAPTKSAYARHFEHDTSSRRNSESASRPLTGSTTAARSDDRPVADDDATETTSLLRGDRRGFTRYGSRRDSTSEGDEDHAQGSRRLDLGNVYPGEQEWSGKLPSWIWIIQLLLLAPLVIVLVGQVALLLTSALYQTPSDGNSPLFIYLAIAALSVLLLAPTGPFIHRFTYHVPTFLFLVCLATVIYNLVAFPFSRDHRLKVYFVQRVNCETGANTVSLTGLDSYVQRIVGELPSAQDQPLNCTTPDVATRKELKTCEWEGLPAKVVPNAAGAAPFGNETNTDRWLEYSIHKGNRSNKATIRVVGLNTRACRIVFDSPITGLAVTGAVSDPRFKPVGAAGSREVRLWHREFGQPWNVALTWDAEEHAKLSGRVVCLWSDANTGSIPAFDEVQHYLPVWAIPSKISDGLVEGFKQFEI.

The Cytoplasmic portion of the chain corresponds to 1 to 10 (MARYNPFSFT). The chain crosses the membrane as a helical span at residues 11–31 (PGPVVFFTTVIYVGLFAALLV). Over 32 to 369 (THLTVPDYPS…RVFVVFQLHT (338 aa)) the chain is Vacuolar. Residues Asn48, Asn105, and Asn136 are each glycosylated (N-linked (GlcNAc...) asparagine). The Zn(2+) site is built by His152 and Asp164. Glu198 (proton acceptor) is an active-site residue. Zn(2+) contacts are provided by Glu199, Glu224, and His297. The helical transmembrane segment at 370–390 (LFALCVTLLVVAPIALIGLTF) threads the bilayer. The Cytoplasmic segment spans residues 391–423 (GLSKADKNYLLARKAFVYSSDDDNPVQLYGWRG). The helical transmembrane segment at 424-444 (FFRFPIVFVSATAVVVALAYL) threads the bilayer. The Vacuolar portion of the chain corresponds to 445–450 (LVRFNA). The helical transmembrane segment at 451–471 (FIIYSSPFAVWSMMLSAWFFV) threads the bilayer. The Cytoplasmic segment spans residues 472–490 (AWFFSRGADAMRPSALQRM). A helical transmembrane segment spans residues 491–511 (YALIWLFIGSFVLLTIITVFV). Residues 512–521 (NNYQVVAGYP) are Vacuolar-facing. A helical membrane pass occupies residues 522 to 542 (ALFYFAVVFAALMLSYLELFF). Over 543 to 642 (APTKSAYARH…YPGEQEWSGK (100 aa)) the chain is Cytoplasmic. Disordered regions lie at residues 560 to 591 (RRNS…DATE) and 603 to 628 (FTRY…RRLD). Positions 564–577 (ESASRPLTGSTTAA) are enriched in polar residues. Residues 643–663 (LPSWIWIIQLLLLAPLVIVLV) form a helical membrane-spanning segment. Residues 664 to 685 (GQVALLLTSALYQTPSDGNSPL) lie on the Vacuolar side of the membrane. Residues 686–706 (FIYLAIAALSVLLLAPTGPFI) traverse the membrane as a helical segment. The Cytoplasmic portion of the chain corresponds to 707 to 713 (HRFTYHV). A helical transmembrane segment spans residues 714-734 (PTFLFLVCLATVIYNLVAFPF). Topologically, residues 735–957 (SRDHRLKVYF…LVEGFKQFEI (223 aa)) are vacuolar. Asn782, Asn818, and Asn834 each carry an N-linked (GlcNAc...) asparagine glycan.

The protein belongs to the peptidase M28 family. Zn(2+) serves as cofactor.

It localises to the vacuole membrane. May be involved in vacuolar sorting and osmoregulation. The sequence is that of Vacuolar membrane protease from Pyrenophora tritici-repentis (strain Pt-1C-BFP) (Wheat tan spot fungus).